Reading from the N-terminus, the 420-residue chain is Histidine--tRNA ligase (420 aa).

This sequence belongs to the class-II aminoacyl-tRNA synthetase family. Homodimer.

The protein localises to the cytoplasm. It catalyses the reaction tRNA(His) + L-histidine + ATP = L-histidyl-tRNA(His) + AMP + diphosphate + H(+). This chain is Histidine--tRNA ligase, found in Desulforudis audaxviator (strain MP104C).